A 409-amino-acid chain; its full sequence is L-cysteine:1D-myo-inositol 2-amino-2-deoxy-alpha-D-glucopyranoside ligase (409 aa).

Cysteine 43 contacts Zn(2+). Residues 43–46 (CGIT), threonine 58, and 81–83 (NVT) each bind L-cysteinyl-5'-AMP. A 'HIGH' region motif is present at residues 45 to 55 (ITPYDATHMGH). Positions 183–188 (ERGGDP) match the 'ERGGDP' region motif. Tryptophan 224 contributes to the L-cysteinyl-5'-AMP binding site. Cysteine 228 is a binding site for Zn(2+). Residue 246 to 248 (GSD) participates in L-cysteinyl-5'-AMP binding. Residue histidine 253 participates in Zn(2+) binding. Valine 280 contacts L-cysteinyl-5'-AMP. The short motif at 286–290 (KMSKS) is the 'KMSKS' region element.

Belongs to the class-I aminoacyl-tRNA synthetase family. MshC subfamily. In terms of assembly, monomer. The cofactor is Zn(2+).

The enzyme catalyses 1D-myo-inositol 2-amino-2-deoxy-alpha-D-glucopyranoside + L-cysteine + ATP = 1D-myo-inositol 2-(L-cysteinylamino)-2-deoxy-alpha-D-glucopyranoside + AMP + diphosphate + H(+). Its function is as follows. Catalyzes the ATP-dependent condensation of GlcN-Ins and L-cysteine to form L-Cys-GlcN-Ins. The protein is L-cysteine:1D-myo-inositol 2-amino-2-deoxy-alpha-D-glucopyranoside ligase of Streptomyces griseus subsp. griseus (strain JCM 4626 / CBS 651.72 / NBRC 13350 / KCC S-0626 / ISP 5235).